The sequence spans 601 residues: uncharacterized protein (601 aa).

Transmembrane regions (helical) follow at residues 74–94 (IFFF…VFSI), 104–124 (VSFL…PNDG), and 531–551 (LVLL…NYYY).

Its subcellular location is the endoplasmic reticulum membrane. This is an uncharacterized protein from Schizosaccharomyces pombe (strain 972 / ATCC 24843) (Fission yeast).